The primary structure comprises 352 residues: UPF0324 membrane protein BCE_5279 (352 aa).

Helical transmembrane passes span 25-47 (FGFSQGIGITLLIAIVAKYLAEL), 52-71 (IMGQLVIAILIGMVWRAAIG), 111-130 (VLVIAAVVITFTIFVVYGLT), 140-162 (GILTACGTAICGAAAVVAIAPQV), 169-191 (TAVGAAIIAILGTIFTLIYTLLY), 201-223 (YGVFSGATLHEIAHVIAAAAPGG), 230-252 (AVIVKLTRVAMLVPVAILIGLWF), 267-289 (LPIPWFIFGFLAMSAVHSLGIIP), 291-313 (VVAGYIVVIAYMLIAMAMAGLGL), and 328-350 (FVAGLIGSVCLSVLGYVLVYALG).

This sequence belongs to the UPF0324 family.

The protein resides in the cell membrane. This chain is UPF0324 membrane protein BCE_5279, found in Bacillus cereus (strain ATCC 10987 / NRS 248).